Consider the following 488-residue polypeptide: Acetyl-coenzyme A carboxylase carboxyl transferase subunit beta, chloroplastic (488 aa).

The CoA carboxyltransferase N-terminal domain maps to 221 to 488; that stretch reads LWIQCDNCYA…FFPLNKNEIK (268 aa). Positions 225, 228, 244, and 247 each coordinate Zn(2+). The C4-type zinc finger occupies 225 to 247; the sequence is CDNCYALIYKKALKLKLNVCEQC.

This sequence belongs to the AccD/PCCB family. In terms of assembly, acetyl-CoA carboxylase is a heterohexamer composed of biotin carboxyl carrier protein, biotin carboxylase and 2 subunits each of ACCase subunit alpha and ACCase plastid-coded subunit beta (accD). Zn(2+) serves as cofactor.

The protein resides in the plastid. It localises to the chloroplast stroma. It carries out the reaction N(6)-carboxybiotinyl-L-lysyl-[protein] + acetyl-CoA = N(6)-biotinyl-L-lysyl-[protein] + malonyl-CoA. The protein operates within lipid metabolism; malonyl-CoA biosynthesis; malonyl-CoA from acetyl-CoA: step 1/1. In terms of biological role, component of the acetyl coenzyme A carboxylase (ACC) complex. Biotin carboxylase (BC) catalyzes the carboxylation of biotin on its carrier protein (BCCP) and then the CO(2) group is transferred by the transcarboxylase to acetyl-CoA to form malonyl-CoA. The chain is Acetyl-coenzyme A carboxylase carboxyl transferase subunit beta, chloroplastic from Aethionema grandiflorum (Persian stone-cress).